Here is a 394-residue protein sequence, read N- to C-terminus: Elongation factor Tu (394 aa).

Residues 10-204 (LPHVNIGTIG…AVDEYIPTPT (195 aa)) form the tr-type G domain. The G1 stretch occupies residues 19–26 (GHVDHGKT). 19 to 26 (GHVDHGKT) serves as a coordination point for GTP. T26 contacts Mg(2+). The tract at residues 60–64 (GITIN) is G2. The tract at residues 81 to 84 (DCPG) is G3. GTP contacts are provided by residues 81–85 (DCPGH) and 136–139 (NKCD). The tract at residues 136-139 (NKCD) is G4. The interval 174–176 (SAL) is G5.

The protein belongs to the TRAFAC class translation factor GTPase superfamily. Classic translation factor GTPase family. EF-Tu/EF-1A subfamily. In terms of assembly, monomer.

Its subcellular location is the cytoplasm. It carries out the reaction GTP + H2O = GDP + phosphate + H(+). Its function is as follows. GTP hydrolase that promotes the GTP-dependent binding of aminoacyl-tRNA to the A-site of ribosomes during protein biosynthesis. This is Elongation factor Tu from Mesoplasma florum (strain ATCC 33453 / NBRC 100688 / NCTC 11704 / L1) (Acholeplasma florum).